The following is a 94-amino-acid chain: Putative regulatory protein THA_332 (94 aa).

The protein belongs to the RemA family.

The chain is Putative regulatory protein THA_332 from Thermosipho africanus (strain TCF52B).